Consider the following 513-residue polypeptide: Bifunctional purine biosynthesis protein PurH (513 aa).

In terms of domain architecture, MGS-like spans Met1–Ile145.

This sequence belongs to the PurH family.

It carries out the reaction (6R)-10-formyltetrahydrofolate + 5-amino-1-(5-phospho-beta-D-ribosyl)imidazole-4-carboxamide = 5-formamido-1-(5-phospho-D-ribosyl)imidazole-4-carboxamide + (6S)-5,6,7,8-tetrahydrofolate. It catalyses the reaction IMP + H2O = 5-formamido-1-(5-phospho-D-ribosyl)imidazole-4-carboxamide. The protein operates within purine metabolism; IMP biosynthesis via de novo pathway; 5-formamido-1-(5-phospho-D-ribosyl)imidazole-4-carboxamide from 5-amino-1-(5-phospho-D-ribosyl)imidazole-4-carboxamide (10-formyl THF route): step 1/1. It functions in the pathway purine metabolism; IMP biosynthesis via de novo pathway; IMP from 5-formamido-1-(5-phospho-D-ribosyl)imidazole-4-carboxamide: step 1/1. The protein is Bifunctional purine biosynthesis protein PurH of Caldicellulosiruptor saccharolyticus (strain ATCC 43494 / DSM 8903 / Tp8T 6331).